A 1066-amino-acid polypeptide reads, in one-letter code: Ubiquitin conjugation factor E4 A (1066 aa).

The segment at 35–57 is disordered; that stretch reads QLKQQSDELPASPDDSDNSVSES. K386 is subject to N6-acetyllysine. A U-box domain is found at 987 to 1061; it reads DACDEFLDPI…QRWLAERKQQ (75 aa).

Belongs to the ubiquitin conjugation factor E4 family.

It localises to the cytoplasm. It catalyses the reaction S-ubiquitinyl-[E2 ubiquitin-conjugating enzyme]-L-cysteine + [acceptor protein]-L-lysine = [E2 ubiquitin-conjugating enzyme]-L-cysteine + N(6)-ubiquitinyl-[acceptor protein]-L-lysine.. It participates in protein modification; protein ubiquitination. Ubiquitin-protein ligase that probably functions as an E3 ligase in conjunction with specific E1 and E2 ligases. May also function as an E4 ligase mediating the assembly of polyubiquitin chains on substrates ubiquitinated by another E3 ubiquitin ligase. Mediates 'Lys-48'-linked polyubiquitination of substrates. The protein is Ubiquitin conjugation factor E4 A of Rattus norvegicus (Rat).